Consider the following 384-residue polypeptide: Acetylornithine aminotransferase (384 aa).

Pyridoxal 5'-phosphate contacts are provided by residues 94 to 95 and Phe121; that span reads GT. Arg124 provides a ligand contact to N(2)-acetyl-L-ornithine. 206-209 is a binding site for pyridoxal 5'-phosphate; sequence DEVQ. An N6-(pyridoxal phosphate)lysine modification is found at Lys235. Position 263 (Ser263) interacts with N(2)-acetyl-L-ornithine. Thr264 is a pyridoxal 5'-phosphate binding site.

Belongs to the class-III pyridoxal-phosphate-dependent aminotransferase family. ArgD subfamily. As to quaternary structure, homodimer. Requires pyridoxal 5'-phosphate as cofactor.

Its subcellular location is the cytoplasm. It catalyses the reaction N(2)-acetyl-L-ornithine + 2-oxoglutarate = N-acetyl-L-glutamate 5-semialdehyde + L-glutamate. Its pathway is amino-acid biosynthesis; L-arginine biosynthesis; N(2)-acetyl-L-ornithine from L-glutamate: step 4/4. The protein is Acetylornithine aminotransferase of Listeria innocua serovar 6a (strain ATCC BAA-680 / CLIP 11262).